The primary structure comprises 366 residues: tRNA/tmRNA (uracil-C(5))-methyltransferase (366 aa).

Gln-190, Tyr-218, Asn-223, Glu-239, and Asp-299 together coordinate S-adenosyl-L-methionine. The active-site Nucleophile is the Cys-324. Glu-358 functions as the Proton acceptor in the catalytic mechanism.

The protein belongs to the class I-like SAM-binding methyltransferase superfamily. RNA M5U methyltransferase family. TrmA subfamily.

The enzyme catalyses uridine(54) in tRNA + S-adenosyl-L-methionine = 5-methyluridine(54) in tRNA + S-adenosyl-L-homocysteine + H(+). It carries out the reaction uridine(341) in tmRNA + S-adenosyl-L-methionine = 5-methyluridine(341) in tmRNA + S-adenosyl-L-homocysteine + H(+). Dual-specificity methyltransferase that catalyzes the formation of 5-methyluridine at position 54 (m5U54) in all tRNAs, and that of position 341 (m5U341) in tmRNA (transfer-mRNA). This chain is tRNA/tmRNA (uracil-C(5))-methyltransferase, found in Escherichia coli O157:H7 (strain EC4115 / EHEC).